Consider the following 536-residue polypeptide: Austinoid biosynthesis cluster protein W (536 aa).

An N-terminal signal peptide occupies residues methionine 1–alanine 19. Disordered regions lie at residues glycine 141 to proline 164, serine 185 to serine 220, phenylalanine 261 to glycine 302, proline 385 to glycine 423, and proline 491 to glutamate 536. Positions serine 195–aspartate 208 are enriched in low complexity. The span at serine 209–serine 220 shows a compositional bias: gly residues. Composition is skewed to low complexity over residues alanine 287–glycine 302 and alanine 408–glycine 423.

Its pathway is secondary metabolite biosynthesis; terpenoid biosynthesis. Part of the gene cluster that mediates the biosynthesis of calidodehydroaustin, a fungal meroterpenoid. The first step of the pathway is the synthesis of 3,5-dimethylorsellinic acid by the polyketide synthase ausA. 3,5-dimethylorsellinic acid is then prenylated by the polyprenyl transferase ausN. Further epoxidation by the FAD-dependent monooxygenase ausM and cyclization by the probable terpene cyclase ausL lead to the formation of protoaustinoid A. Protoaustinoid A is then oxidized to spiro-lactone preaustinoid A3 by the combined action of the FAD-binding monooxygenases ausB and ausC, and the dioxygenase ausE. Acid-catalyzed keto-rearrangement and ring contraction of the tetraketide portion of preaustinoid A3 by ausJ lead to the formation of preaustinoid A4. The aldo-keto reductase ausK, with the help of ausH, is involved in the next step by transforming preaustinoid A4 into isoaustinone which is in turn hydroxylated by the P450 monooxygenase ausI to form austinolide. The cytochrome P450 monooxygenase ausG modifies austinolide to austinol. Austinol is further acetylated to austin by the O-acetyltransferase ausP, which spontaneously changes to dehydroaustin. The cytochrome P450 monooxygenase ausR then converts dehydroaustin is into 7-dehydrodehydroaustin. The hydroxylation catalyzed by ausR permits the O-acetyltransferase ausQ to add an additional acetyl group to the molecule, leading to the formation of acetoxydehydroaustin. The short chain dehydrogenase ausT catalyzes the reduction of the double bond present between carbon atoms 1 and 2 to convert 7-dehydrodehydroaustin into 1,2-dihydro-7-hydroxydehydroaustin. AusQ catalyzes not only an acetylation reaction but also the addition of the PKS ausV diketide product to 1,2-dihydro-7-hydroxydehydroaustin, forming precalidodehydroaustin. Finally, the iron/alpha-ketoglutarate-dependent dioxygenase converts precalidodehydroaustin into calidodehydroaustin. The polypeptide is Austinoid biosynthesis cluster protein W (Aspergillus calidoustus).